Reading from the N-terminus, the 404-residue chain is uncharacterized protein (404 aa).

The next 2 helical transmembrane spans lie at 35-55 (ILFS…FTFL) and 92-112 (EDIW…ISSI).

It localises to the membrane. This is an uncharacterized protein from Saccharomyces cerevisiae (strain ATCC 204508 / S288c) (Baker's yeast).